A 173-amino-acid chain; its full sequence is Crossover junction endodeoxyribonuclease RuvC (173 aa).

Residues Asp8, Glu67, and Asp139 contribute to the active site. Residues Asp8, Glu67, and Asp139 each contribute to the Mg(2+) site.

This sequence belongs to the RuvC family. As to quaternary structure, homodimer which binds Holliday junction (HJ) DNA. The HJ becomes 2-fold symmetrical on binding to RuvC with unstacked arms; it has a different conformation from HJ DNA in complex with RuvA. In the full resolvosome a probable DNA-RuvA(4)-RuvB(12)-RuvC(2) complex forms which resolves the HJ. Mg(2+) serves as cofactor.

The protein localises to the cytoplasm. The enzyme catalyses Endonucleolytic cleavage at a junction such as a reciprocal single-stranded crossover between two homologous DNA duplexes (Holliday junction).. In terms of biological role, the RuvA-RuvB-RuvC complex processes Holliday junction (HJ) DNA during genetic recombination and DNA repair. Endonuclease that resolves HJ intermediates. Cleaves cruciform DNA by making single-stranded nicks across the HJ at symmetrical positions within the homologous arms, yielding a 5'-phosphate and a 3'-hydroxyl group; requires a central core of homology in the junction. The consensus cleavage sequence is 5'-(A/T)TT(C/G)-3'. Cleavage occurs on the 3'-side of the TT dinucleotide at the point of strand exchange. HJ branch migration catalyzed by RuvA-RuvB allows RuvC to scan DNA until it finds its consensus sequence, where it cleaves and resolves the cruciform DNA. In Pseudoalteromonas atlantica (strain T6c / ATCC BAA-1087), this protein is Crossover junction endodeoxyribonuclease RuvC.